Consider the following 471-residue polypeptide: Tigger transposable element-derived protein 3 (471 aa).

The HTH psq-type domain occupies 3–55 (LSSKKKLHALSLAEKIQVLELLDESKMSQSEVARRFQVSQPQISRICKNKEKL). DNA-binding regions (H-T-H motif) lie at residues 31–51 (QSEV…ICKN) and 100–130 (PMLL…WKRR). Residues 67–137 (ERKRKRESKY…KRRNNVGFGA (71 aa)) enclose the HTH CENPB-type domain. In terms of domain architecture, DDE-1 spans 167 to 360 (FSPEDVFGCA…VPPQLIFSSF (194 aa)).

The protein belongs to the tigger transposable element derived protein family.

The protein resides in the nucleus. In Homo sapiens (Human), this protein is Tigger transposable element-derived protein 3 (TIGD3).